A 165-amino-acid polypeptide reads, in one-letter code: Phosphopantetheine adenylyltransferase (165 aa).

Substrate is bound at residue serine 10. ATP is bound by residues 10 to 11 (SF) and histidine 18. Substrate-binding residues include lysine 42, leucine 74, and arginine 88. ATP contacts are provided by residues 89-91 (GLR), glutamate 99, and 124-130 (WFYTSST).

It belongs to the bacterial CoaD family. Homohexamer. Mg(2+) is required as a cofactor.

The protein resides in the cytoplasm. It catalyses the reaction (R)-4'-phosphopantetheine + ATP + H(+) = 3'-dephospho-CoA + diphosphate. Its pathway is cofactor biosynthesis; coenzyme A biosynthesis; CoA from (R)-pantothenate: step 4/5. Its function is as follows. Reversibly transfers an adenylyl group from ATP to 4'-phosphopantetheine, yielding dephospho-CoA (dPCoA) and pyrophosphate. In Syntrophus aciditrophicus (strain SB), this protein is Phosphopantetheine adenylyltransferase.